A 148-amino-acid chain; its full sequence is Putative cyclin-dependent kinase inhibitor SPL2 (148 aa).

Phosphoserine is present on residues S59 and S86.

The protein resides in the cytoplasmic granule. The protein localises to the cytoplasm. Putative cyclin-dependent kinase (CDK) inhibitor necessary and sufficient for PHO pathway-dependent down-regulation of low-affinity phosphate transport. This Saccharomyces cerevisiae (strain YJM789) (Baker's yeast) protein is Putative cyclin-dependent kinase inhibitor SPL2 (SPL2).